The sequence spans 620 residues: Glutathione-regulated potassium-efflux system protein KefC (620 aa).

The next 12 membrane-spanning stretches (helical) occupy residues 4–24 (HTLMQALIYLGSAALIVPIAV), 26–46 (LGLGSVLGYLIAGCIIGPWGL), 54–74 (SILHFAEIGVVLMLFVIGLEL), 90–110 (GALQMVICGGLIGFFCMFLGL), 114–134 (VAELIGMTLALSSTAIAMQAM), 149–169 (FAVLLFQDIAAIPLVAMIPLL), 178–198 (LGAFALSALKVAGALALVVLL), 218–238 (VFSAVALFLVFGFGLLLEEVG), 270–290 (GLLLGLFFIGVGMSIDFGTLV), 294–314 (LRILLLLAGFLAIKIVMLWLI), 327–347 (WFAVLLGQGSEFAFVVFGAAQ), and 359–379 (ALTLAVALSMAATPIFLVLLT). The RCK N-terminal domain maps to 399–518 (QPRVIVAGFG…AGVAMPERET (120 aa)). Residues 599-620 (QGTAEGKHTGDIADEPQVKPST) form a disordered region.

Belongs to the monovalent cation:proton antiporter 2 (CPA2) transporter (TC 2.A.37) family. KefC subfamily. In terms of assembly, homodimer. Interacts with the regulatory subunit KefF.

The protein resides in the cell inner membrane. Its function is as follows. Pore-forming subunit of a potassium efflux system that confers protection against electrophiles. Catalyzes K(+)/H(+) antiport. The sequence is that of Glutathione-regulated potassium-efflux system protein KefC from Salmonella arizonae (strain ATCC BAA-731 / CDC346-86 / RSK2980).